The following is a 450-amino-acid chain: Probable ECA polymerase (450 aa).

Transmembrane regions (helical) follow at residues 6–26 (FSGL…LTWF), 37–57 (VFFS…TSVL), 63–83 (VGVA…CFYA), 118–138 (VILM…NGFL), 155–175 (GVAL…VYFL), 181–201 (AWLF…MIVG), 207–227 (IIIA…ISLW), 228–248 (MLAA…LKRY), 341–361 (LVVM…GLII), 378–398 (YKAA…IVLA), and 410–430 (VFFI…YWLF).

The protein belongs to the WzyE family. Probably part of a complex composed of WzxE, WzyE and WzzE.

The protein resides in the cell inner membrane. It functions in the pathway bacterial outer membrane biogenesis; enterobacterial common antigen biosynthesis. Functionally, probably involved in the polymerization of enterobacterial common antigen (ECA) trisaccharide repeat units. The polypeptide is Probable ECA polymerase (Shigella boydii serotype 18 (strain CDC 3083-94 / BS512)).